We begin with the raw amino-acid sequence, 243 residues long: MKLYRDEAVVLRTHKLGEADRILTLLTRHHGQVRAVAKGVRRTSSKFGARLEPFGVIDLQLYAGRSLDVVTQVDTLAPHGRSIVGDYALYTTATAMVETAERLTEIEREPATQQYLLLVGALRALAERAHAPTLVLDSYLLRSLAVAGWAPTFTDCARCSREGPHRAFSAPMGGALCQACRPPGAAAPAAETFLLLGALLAGDWALADASDERHRRESSGLVAAYLQWHLERQLRSLRHVERA.

The protein belongs to the RecO family.

Its function is as follows. Involved in DNA repair and RecF pathway recombination. The sequence is that of DNA repair protein RecO from Beutenbergia cavernae (strain ATCC BAA-8 / DSM 12333 / CCUG 43141 / JCM 11478 / NBRC 16432 / NCIMB 13614 / HKI 0122).